Here is a 520-residue protein sequence, read N- to C-terminus: MTEISILNDVQKIIVLDYGSQYNQLIARRIREFGVFSELKSHKITAQELREINPIGIVLSGGPNSVYADNAFGIDPEIFELEIPILGICYGMQLITHKLGGKVVPAGQAGNREYGQSTLHLRETSKLFSGTPQEQLVLMSHGDAVTEIPEGFHLVGDSNDCPYAAIENTEKNLYGIQFHPEVRHSVYGNDILKNFAISICGARGDWSMDNFIDMEIAKIRETVGDRKVLLGLSGGVDSSVVGVLLQKAIGDQLTCIFVDHGLLRKDEGDQVMGMLGGKFGLNIIRVDASKRFLDLLADVEDPEKKRKIIGNEFVYVFDDEASKLKGVDFLAQGTLYTDIIESGTETAQTIKSHHNVGGLPEDMQFELIEPLNTLFKDEVRALGIALGMPEEIVWRQPFPGPGLAIRVMGAITEEKLETVRESDAILREEIAKAGLDRDVWQYFTVNTGVRSVGVMGDGRTYDYTIAIRAITSIDGMTADFAQLPWDVLKKISTRIVNEVDHVNRIVYDITSKPPATVEWE.

The 194-residue stretch at 12–205 (KIIVLDYGSQ…AISICGARGD (194 aa)) folds into the Glutamine amidotransferase type-1 domain. The active-site Nucleophile is Cys89. Residues His179 and Glu181 contribute to the active site. A GMPS ATP-PPase domain is found at 206–395 (WSMDNFIDME…LGMPEEIVWR (190 aa)). 233 to 239 (SGGVDSS) serves as a coordination point for ATP.

In terms of assembly, homodimer.

The enzyme catalyses XMP + L-glutamine + ATP + H2O = GMP + L-glutamate + AMP + diphosphate + 2 H(+). It functions in the pathway purine metabolism; GMP biosynthesis; GMP from XMP (L-Gln route): step 1/1. Its function is as follows. Catalyzes the synthesis of GMP from XMP. In Streptococcus pyogenes serotype M5 (strain Manfredo), this protein is GMP synthase [glutamine-hydrolyzing].